The sequence spans 438 residues: GTPase Der (438 aa).

2 EngA-type G domains span residues 4-168 and 177-352; these read PIVA…NDPS and IRIA…DNYS. GTP is bound by residues 10–17, 57–61, 120–123, 183–190, 230–234, and 295–298; these read GRPNVGKS, DTGGI, NKID, GKPNVGKS, DTAGL, and NKWD. Residues 353-437 enclose the KH-like domain; the sequence is KRVSTGLLND…GIEIEYRARK (85 aa).

Belongs to the TRAFAC class TrmE-Era-EngA-EngB-Septin-like GTPase superfamily. EngA (Der) GTPase family. Associates with the 50S ribosomal subunit.

GTPase that plays an essential role in the late steps of ribosome biogenesis. This chain is GTPase Der, found in Clostridium perfringens (strain ATCC 13124 / DSM 756 / JCM 1290 / NCIMB 6125 / NCTC 8237 / Type A).